The primary structure comprises 304 residues: Zinc carboxypeptidase (304 aa).

The region spanning 1-294 is the Peptidase M14 domain; it reads QYHTLPEIYS…DSVVTILKES (294 aa). 2 residues coordinate Zn(2+): His-58 and Glu-61. An intrachain disulfide couples Cys-125 to Cys-148. His-184 serves as a coordination point for Zn(2+). The active-site Proton donor/acceptor is the Glu-259.

This sequence belongs to the peptidase M14 family. Zn(2+) is required as a cofactor. In terms of tissue distribution, gut specific.

The protein localises to the secreted. Involved in the digestion of the blood meal. The polypeptide is Zinc carboxypeptidase (Simulium vittatum (Striped black fly)).